Reading from the N-terminus, the 353-residue chain is MTITVAVDCMGGDHGPHVTVPATVSYLQSNPAIDVVLVGLPDVIESELRALGYTQSPRLRIHAASEVVGMDESPATALRGKKNSSMRVALNLVKSGEAQACVSAGNTGALLATSRFVLKTLPGIDRPALAVVLPTMRGHTYVLDLGANVDCTAEHLLQFGVMGATLVSSIENKEKPSIGLLNIGEEEIKGNDVVKRAAELLRDSGLNFYGNIEGNDIYKGTTDVVVCDGFVGNVALKTSEGVAQMLSHYLREEFRRNLLTKLAGLIALPVISAFKRRVDHRRYNGASLLGLRGIVIKSHGSADRRAFGFAIARAVDEVRGGMLRHISERVAQLSHQSMQSSSYRRSLPEESPV.

Belongs to the PlsX family. In terms of assembly, homodimer. Probably interacts with PlsY.

The protein localises to the cytoplasm. It catalyses the reaction a fatty acyl-[ACP] + phosphate = an acyl phosphate + holo-[ACP]. It functions in the pathway lipid metabolism; phospholipid metabolism. Functionally, catalyzes the reversible formation of acyl-phosphate (acyl-PO(4)) from acyl-[acyl-carrier-protein] (acyl-ACP). This enzyme utilizes acyl-ACP as fatty acyl donor, but not acyl-CoA. The sequence is that of Phosphate acyltransferase from Nitrosospira multiformis (strain ATCC 25196 / NCIMB 11849 / C 71).